We begin with the raw amino-acid sequence, 434 residues long: Trigger factor (434 aa).

The PPIase FKBP-type domain occupies Glu161–Pro246.

This sequence belongs to the FKBP-type PPIase family. Tig subfamily.

Its subcellular location is the cytoplasm. It catalyses the reaction [protein]-peptidylproline (omega=180) = [protein]-peptidylproline (omega=0). Functionally, involved in protein export. Acts as a chaperone by maintaining the newly synthesized protein in an open conformation. Functions as a peptidyl-prolyl cis-trans isomerase. This is Trigger factor from Dechloromonas aromatica (strain RCB).